Here is a 175-residue protein sequence, read N- to C-terminus: SKP1-like protein 20 (175 aa).

An interaction with the F-box domain of F-box proteins region spans residues 117–175; sequence ILAANYLNIKGLLDLTCQTVADMIKGKTPEEIRKTFNIKNDFTPEEEEEVRRENQWAFE.

The protein belongs to the SKP1 family. Part of a SCF (SKP1-CUL1-F-box protein) E3 ubiquitin-protein ligase complex. Interacts with rice black streaked dwarf virus RBSDV protein P7-2. Is able to form the SCF complex together with CUL1 and the viral P7-2 protein. Interacts with D3.

The protein localises to the nucleus. The protein operates within protein modification; protein ubiquitination. Functionally, involved in ubiquitination and subsequent proteasomal degradation of target proteins. Together with CUL1, a RING-box and a F-box protein, it forms a SCF E3 ubiquitin ligase complex. The functional specificity of this complex depends on the type of F-box protein. In the SCF complex, it serves as an adapter that links the F-box protein to CUL1. This chain is SKP1-like protein 20, found in Oryza sativa subsp. japonica (Rice).